Consider the following 388-residue polypeptide: Lipid-A-disaccharide synthase (388 aa).

Belongs to the LpxB family.

It catalyses the reaction a lipid X + a UDP-2-N,3-O-bis[(3R)-3-hydroxyacyl]-alpha-D-glucosamine = a lipid A disaccharide + UDP + H(+). The protein operates within bacterial outer membrane biogenesis; LPS lipid A biosynthesis. In terms of biological role, condensation of UDP-2,3-diacylglucosamine and 2,3-diacylglucosamine-1-phosphate to form lipid A disaccharide, a precursor of lipid A, a phosphorylated glycolipid that anchors the lipopolysaccharide to the outer membrane of the cell. The polypeptide is Lipid-A-disaccharide synthase (Burkholderia pseudomallei (strain 1710b)).